The sequence spans 313 residues: MTSCHIAEEPIQKVAIFGGTHGNELTGVFLVKHWLENGAEIQRTGLEVKPFITNPRAVKKCTRYIDCDLNRIFDLENLGKKMSEDLPYEVRRAQEINHLFGPKDSEDSYDIIFDLHNTTSNMGCTLILEDSRNNFLIQMFHYIKTSLAPLPCYVYLIEHPSLKYATTRSIAKYPVGIEVGPQPQGVLRADILDQMRKMIKHALDFIHHFNEGKEFPPCAIEVYKIIEKVDYPRDENGEIAAVIHPNLQDQDWKPLHPGDPMFLTLDGKTIPLGGDCTVYPVFVNEAAYYEKKEAFAKTTKLTLNAKSIRCSLH.

The Zn(2+) site is built by His21 and Glu24. Positions 63, 70, and 71 each coordinate N-acetyl-L-aspartate. His116 provides a ligand contact to Zn(2+). The N-acetyl-L-aspartate site is built by Tyr164 and Arg168. Glu178 acts as the Proton donor/acceptor in catalysis. An N-acetyl-L-aspartate-binding site is contributed by Tyr288.

It belongs to the AspA/AstE family. Aspartoacylase subfamily. In terms of assembly, homodimer. Zn(2+) serves as cofactor.

Its subcellular location is the cytoplasm. It localises to the nucleus. It catalyses the reaction an N-acyl-L-aspartate + H2O = a carboxylate + L-aspartate. It carries out the reaction N-acetyl-L-aspartate + H2O = L-aspartate + acetate. Catalyzes the deacetylation of N-acetylaspartic acid (NAA) to produce acetate and L-aspartate. NAA occurs in high concentration in brain and its hydrolysis NAA plays a significant part in the maintenance of intact white matter. In other tissues it acts as a scavenger of NAA from body fluids. The chain is Aspartoacylase from Pongo abelii (Sumatran orangutan).